The primary structure comprises 147 residues: D-aminoacyl-tRNA deacylase (147 aa).

The Gly-cisPro motif, important for rejection of L-amino acids motif lies at 137–138 (GP).

It belongs to the DTD family. In terms of assembly, homodimer.

The protein localises to the cytoplasm. It carries out the reaction glycyl-tRNA(Ala) + H2O = tRNA(Ala) + glycine + H(+). The catalysed reaction is a D-aminoacyl-tRNA + H2O = a tRNA + a D-alpha-amino acid + H(+). Functionally, an aminoacyl-tRNA editing enzyme that deacylates mischarged D-aminoacyl-tRNAs. Also deacylates mischarged glycyl-tRNA(Ala), protecting cells against glycine mischarging by AlaRS. Acts via tRNA-based rather than protein-based catalysis; rejects L-amino acids rather than detecting D-amino acids in the active site. By recycling D-aminoacyl-tRNA to D-amino acids and free tRNA molecules, this enzyme counteracts the toxicity associated with the formation of D-aminoacyl-tRNA entities in vivo and helps enforce protein L-homochirality. Upon expression in B.subtilis strain 168 confers resistance to D-Tyr and D-Asp, suggesting it acts on both of these amino acids. The chain is D-aminoacyl-tRNA deacylase from Bacillus amyloliquefaciens (Bacillus velezensis).